The sequence spans 739 residues: Oxysterol-binding protein-related protein 9 (739 aa).

One can recognise a PH domain in the interval Ala2–Leu99. 2 disordered regions span residues Thr220–Ser292 and Ser306–Glu371. Positions Asn249–Ile259 are enriched in polar residues. A compositionally biased stretch (low complexity) spans Ser260 to Ser276. 3 stretches are compositionally biased toward polar residues: residues His277 to Ser292, Ser306 to Ala330, and Thr338 to Ala352.

This sequence belongs to the OSBP family.

The enzyme catalyses a 1,2-diacyl-sn-glycero-3-phospho-(1D-myo-inositol 4-phosphate)(out) + a 1,2-diacyl-sn-glycero-3-phospho-L-serine(in) = a 1,2-diacyl-sn-glycero-3-phospho-(1D-myo-inositol 4-phosphate)(in) + a 1,2-diacyl-sn-glycero-3-phospho-L-serine(out). Interacts with OSBPL11 to function as lipid transfer proteins. Together they form a heterodimer that localizes at the ER-trans-Golgi membrane contact sites, and exchanges phosphatidylserine (1,2-diacyl-sn-glycero-3-phospho-L-serine, PS) for phosphatidylinositol-4-phosphate (1,2-diacyl-sn-glycero-3-phospho-(1D-myo-inositol 4-phosphate), PI(4)P) between the two organelles, a step that is critical for sphingomyelin synthesis in the Golgi complex. The polypeptide is Oxysterol-binding protein-related protein 9 (osbpl9) (Xenopus tropicalis (Western clawed frog)).